We begin with the raw amino-acid sequence, 73 residues long: Putative neurotoxin NaH-Cpp1a (73 aa).

The first 23 residues, 1–23 (MKSFYGILCVAVLMMFHLEMSES), serve as a signal peptide directing secretion. 3 disulfides stabilise this stretch: C43–C58, C50–C63, and C57–C70.

In terms of tissue distribution, expressed outside of acontia.

It localises to the secreted. It is found in the nematocyst. Putative neurotoxin. The polypeptide is Putative neurotoxin NaH-Cpp1a (Calliactis polypus (Hermit crab anemone)).